Reading from the N-terminus, the 112-residue chain is Protein ORF1 (112 aa).

Over residues 1-10 the composition is skewed to low complexity; it reads MEGTDWSGWG. The interval 1 to 20 is disordered; it reads MEGTDWSGWGDDSDFPWPKG. Residues 51 to 71 form a helical membrane-spanning segment; it reads IAFVILIVSLFVLLLGVLLAC.

Its subcellular location is the host membrane. The chain is Protein ORF1 from Snake adenovirus serotype 1 (SnAdV-1).